The sequence spans 378 residues: MPNSTLTLAQMLIARRSLTPDDDGCQKILVHRLAGLGFNSEAMNFGEVENLWTRKGIDGPLVCFVGHTDVVPTGPVAQWDSDPFTPTVRDGFLYGRGAADMKSSIAAFVTAIEEFVELHPDHKGSIALLITSDEEGPAVEGTVKVVETLQARGEVIDYCIVGEPTCTDRLGDTIKNGRRGSLSGNLTVKGIQGHIAYPHLARNPIHTAAPAIAELAQTVWDDGNEYFPATTWHISNIRGGTGATNVIPGEVNLLFNFRFSTASTVESLKTRVHEILDRHGLEYELVWELSGKPYLTPKGILADALSAAIREVTGVEPELSTSGGTSDGRFIADICSQVVEFGPRNATIHKINESVEVADIERLSRIYRLTLEKLLLQD.

Histidine 67 is a Zn(2+) binding site. Aspartate 69 is an active-site residue. Aspartate 100 is a binding site for Zn(2+). Glutamate 134 functions as the Proton acceptor in the catalytic mechanism. Residues glutamate 135, glutamate 163, and histidine 349 each coordinate Zn(2+).

This sequence belongs to the peptidase M20A family. DapE subfamily. In terms of assembly, homodimer. Requires Zn(2+) as cofactor. It depends on Co(2+) as a cofactor.

It catalyses the reaction N-succinyl-(2S,6S)-2,6-diaminopimelate + H2O = (2S,6S)-2,6-diaminopimelate + succinate. It functions in the pathway amino-acid biosynthesis; L-lysine biosynthesis via DAP pathway; LL-2,6-diaminopimelate from (S)-tetrahydrodipicolinate (succinylase route): step 3/3. Catalyzes the hydrolysis of N-succinyl-L,L-diaminopimelic acid (SDAP), forming succinate and LL-2,6-diaminopimelate (DAP), an intermediate involved in the bacterial biosynthesis of lysine and meso-diaminopimelic acid, an essential component of bacterial cell walls. This chain is Succinyl-diaminopimelate desuccinylase, found in Nitrosomonas eutropha (strain DSM 101675 / C91 / Nm57).